Reading from the N-terminus, the 148-residue chain is 15 kDa excretory/secretory protein (148 aa).

The first 19 residues, 1-19, serve as a signal peptide directing secretion; the sequence is MFFAFAVLLIALATREAYG.

The protein to T.colubriformis 30 kDa antigenic glycoprotein.

Its subcellular location is the secreted. This Haemonchus contortus (Barber pole worm) protein is 15 kDa excretory/secretory protein.